The sequence spans 452 residues: Bifunctional purine biosynthesis protein PurH (452 aa).

Positions 1–115 (MKRILVSLYE…KNWKKVKPAF (115 aa)) constitute an MGS-like domain.

This sequence belongs to the PurH family.

It carries out the reaction (6R)-10-formyltetrahydrofolate + 5-amino-1-(5-phospho-beta-D-ribosyl)imidazole-4-carboxamide = 5-formamido-1-(5-phospho-D-ribosyl)imidazole-4-carboxamide + (6S)-5,6,7,8-tetrahydrofolate. The catalysed reaction is IMP + H2O = 5-formamido-1-(5-phospho-D-ribosyl)imidazole-4-carboxamide. Its pathway is purine metabolism; IMP biosynthesis via de novo pathway; 5-formamido-1-(5-phospho-D-ribosyl)imidazole-4-carboxamide from 5-amino-1-(5-phospho-D-ribosyl)imidazole-4-carboxamide (10-formyl THF route): step 1/1. It functions in the pathway purine metabolism; IMP biosynthesis via de novo pathway; IMP from 5-formamido-1-(5-phospho-D-ribosyl)imidazole-4-carboxamide: step 1/1. The sequence is that of Bifunctional purine biosynthesis protein PurH from Thermotoga maritima (strain ATCC 43589 / DSM 3109 / JCM 10099 / NBRC 100826 / MSB8).